The following is a 242-amino-acid chain: Ribonuclease 3 (242 aa).

The RNase III domain maps to 18–146 (APAIEAKLGY…IIGAIYLDGG (129 aa)). Glu59 lines the Mg(2+) pocket. Asp63 is an active-site residue. Mg(2+) contacts are provided by Asp132 and Glu135. Residue Glu135 is part of the active site. The 70-residue stretch at 172-241 (NWKALLQDYC…AADALSRVEL (70 aa)) folds into the DRBM domain. Residues 218 to 227 (RGKGTSKKEA) are compositionally biased toward basic and acidic residues. Residues 218–242 (RGKGTSKKEAQQAAAADALSRVELP) form a disordered region.

It belongs to the ribonuclease III family. As to quaternary structure, homodimer. Mg(2+) is required as a cofactor.

It is found in the cytoplasm. It carries out the reaction Endonucleolytic cleavage to 5'-phosphomonoester.. Its function is as follows. Digests double-stranded RNA. Involved in the processing of primary rRNA transcript to yield the immediate precursors to the large and small rRNAs (23S and 16S). Processes some mRNAs, and tRNAs when they are encoded in the rRNA operon. Processes pre-crRNA and tracrRNA of type II CRISPR loci if present in the organism. This is Ribonuclease 3 from Protochlamydia amoebophila (strain UWE25).